The following is a 373-amino-acid chain: tRNA-specific 2-thiouridylase MnmA (373 aa).

Residues 12–19 (GMSGGVDS) and methionine 38 each bind ATP. The interval 98-100 (NPD) is interaction with target base in tRNA. Cysteine 103 acts as the Nucleophile in catalysis. Residues cysteine 103 and cysteine 200 are joined by a disulfide bond. Glycine 127 is a binding site for ATP. Residues 150–152 (KDQ) are interaction with tRNA. Catalysis depends on cysteine 200, which acts as the Cysteine persulfide intermediate. The segment at 312-313 (RY) is interaction with tRNA.

This sequence belongs to the MnmA/TRMU family.

It localises to the cytoplasm. The enzyme catalyses S-sulfanyl-L-cysteinyl-[protein] + uridine(34) in tRNA + AH2 + ATP = 2-thiouridine(34) in tRNA + L-cysteinyl-[protein] + A + AMP + diphosphate + H(+). Catalyzes the 2-thiolation of uridine at the wobble position (U34) of tRNA, leading to the formation of s(2)U34. This is tRNA-specific 2-thiouridylase MnmA from Streptococcus pyogenes serotype M28 (strain MGAS6180).